The sequence spans 152 residues: Protein-export protein SecB (152 aa).

The protein belongs to the SecB family. As to quaternary structure, homotetramer, a dimer of dimers. One homotetramer interacts with 1 SecA dimer.

The protein resides in the cytoplasm. In terms of biological role, one of the proteins required for the normal export of preproteins out of the cell cytoplasm. It is a molecular chaperone that binds to a subset of precursor proteins, maintaining them in a translocation-competent state. It also specifically binds to its receptor SecA. This Rickettsia africae (strain ESF-5) protein is Protein-export protein SecB.